Reading from the N-terminus, the 201-residue chain is Peptidyl-tRNA hydrolase (201 aa).

Y14 lines the tRNA pocket. H19 (proton acceptor) is an active-site residue. 3 residues coordinate tRNA: Y64, N66, and N113. A disordered region spans residues 178–201 (PGPAMNRFNRKPEPPESGGEVAAK).

It belongs to the PTH family. Monomer.

Its subcellular location is the cytoplasm. It catalyses the reaction an N-acyl-L-alpha-aminoacyl-tRNA + H2O = an N-acyl-L-amino acid + a tRNA + H(+). In terms of biological role, hydrolyzes ribosome-free peptidyl-tRNAs (with 1 or more amino acids incorporated), which drop off the ribosome during protein synthesis, or as a result of ribosome stalling. Catalyzes the release of premature peptidyl moieties from peptidyl-tRNA molecules trapped in stalled 50S ribosomal subunits, and thus maintains levels of free tRNAs and 50S ribosomes. The polypeptide is Peptidyl-tRNA hydrolase (Koribacter versatilis (strain Ellin345)).